A 465-amino-acid chain; its full sequence is uncharacterized protein (465 aa).

The TRAM domain occupies 1–50 (MEITDLAAEGNALCRIDDMVMFVPFAAPGDRCTVQVVKKKRNFMQGRIVS). [4Fe-4S] cluster is bound by residues C63, C69, C72, and C168. Positions 293, 322, 343, and 392 each coordinate S-adenosyl-L-methionine. The active-site Nucleophile is the C419.

The protein belongs to the class I-like SAM-binding methyltransferase superfamily. RNA M5U methyltransferase family.

This is an uncharacterized protein from Porphyromonas gingivalis (strain ATCC BAA-308 / W83).